A 61-amino-acid chain; its full sequence is Large ribosomal subunit protein eL29y (61 aa).

The tract at residues 1–61 (MAKSKNHTAH…KSGENAGVEE (61 aa)) is disordered. Residues 15 to 31 (KAHKNGIKKPRRHRHTP) are compositionally biased toward basic residues.

Belongs to the eukaryotic ribosomal protein eL29 family.

This is Large ribosomal subunit protein eL29y (RPL29B) from Arabidopsis thaliana (Mouse-ear cress).